The following is a 1139-amino-acid chain: Solute carrier family 12 member 5 (1139 aa).

2 disordered regions span residues 1–63 (MSRR…GKEY) and 92–116 (TNLP…KPVQ). Residues 1 to 98 (MSRRFTVTSL…ANYTNLPQGS (98 aa)) lie on the Cytoplasmic side of the membrane. Residues 19–45 (PDPESRRHSVADPRHLPGEDVKGDGNP) are compositionally biased toward basic and acidic residues. Over residues 46-55 (KESSPFINST) the composition is skewed to polar residues. The residue at position 57 (Thr57) is a Phosphothreonine. The segment covering 98–111 (SREHEEAENNEGGK) has biased composition (basic and acidic residues). A discontinuously helical transmembrane segment spans residues 99–120 (REHEEAENNEGGKKKPVQAPRM). Lys113 contributes to the K(+) binding site. At 121 to 129 (GTFMGVYLP) the chain is on the extracellular side. The helical transmembrane segment at 130–151 (CLQNIFGVILFLRLTWVVGIAG) threads the bilayer. Residues 152–174 (IMESFCMVFICCSCTMLTAISMS) lie on the Cytoplasmic side of the membrane. The chain crosses the membrane as a helical span at residues 175–203 (AIATNGVVPAGGSYYMISRSLGPEFGGAV). Ala184 lines the chloride pocket. Topologically, residues 204 to 229 (GLCFYLGTTFAGAMYILGTIEILLAY) are extracellular. 2 consecutive transmembrane segments (helical) span residues 230–250 (LFPA…AAML) and 251–276 (NNMR…KYVN). Residues 277–402 (KFALVFLGCV…ERSGMTSVGL (126 aa)) lie on the Extracellular side of the membrane. Residues Cys310 and Cys325 are joined by a disulfide bond. N-linked (GlcNAc...) asparagine glycosylation is found at Asn314, Asn333, Asn351, and Asn362. Cys345 and Cys354 are joined by a disulfide. A helical membrane pass occupies residues 403 to 420 (ADGTPIDMDHPYVFSDMT). Met410 is a binding site for K(+). 2 residues coordinate chloride: Tyr414 and Val415. The Cytoplasmic portion of the chain corresponds to 421-429 (SYFTLLVGI). A helical transmembrane segment spans residues 430 to 453 (YFPSVTGIMAGSNRSGDLRDAQKS). Residue Asp446 coordinates K(+). The Extracellular segment spans residues 454–485 (IPTGTILAIATTSAVYISSVVLFGACIEGVVL). A helical transmembrane segment spans residues 486-513 (RDKFGEAVNGNLVVGTLAWPSPWVIVIG). The Cytoplasmic segment spans residues 514–534 (SFFSTCGAGLQSLTGAPRLLQ). Helical transmembrane passes span 535 to 555 (AISR…KANG) and 556 to 578 (EPTW…ASLD). Glu569 serves as a coordination point for chloride. Over 579-592 (EVAPILSMFFLMCY) the chain is Cytoplasmic. Transmembrane regions (helical) follow at residues 593 to 615 (MFVN…PRFR) and 616 to 632 (YYHW…CLAL). The Cytoplasmic portion of the chain corresponds to 633–1139 (MFICSWYYAL…GGREVITIYS (507 aa)). Residues 667 to 681 (GIRGLSLSAARYALL) are scissor helix. Thr929 is modified (phosphothreonine; by OXSR1 and STK39). Positions 942–1052 (MHLTKNERER…GPSPVSSEGI (111 aa)) are disordered. The span at 945-962 (TKNEREREIQSITDESRG) shows a compositional bias: basic and acidic residues. Acidic residues predominate over residues 982–994 (TAGDSEEKPEEEV). Positions 1003–1012 (PSCPSSSPSP) are enriched in low complexity. The segment covering 1023–1042 (DPEKVHLTWTKDKSVAEKNK) has biased composition (basic and acidic residues). Thr1030 is subject to Phosphothreonine; by OXSR1 and STK39. Residues Ser1045, Ser1048, and Ser1049 each carry the phosphoserine modification.

Belongs to the SLC12A transporter family. K/Cl co-transporter subfamily. As to quaternary structure, homodimer; adopts a domain-swap conformation at the scissor helices connecting the transmembrane domain and C-terminal domain. Heterodimer with K-Cl cotransporters SLC12A6 and SLC12A7. Interacts with AP2A1. Phosphorylated at Thr-929 and Thr-1030 by OXSR1/OSR1 and STK39/SPAK downstream of WNK kinases (WNK1, WNK2, WNK3 or WNK4), inhibiting the potassium-chloride cotransport activity. As to expression, brain specific. Detected in neuronal cells.

It localises to the cell membrane. Its subcellular location is the cell projection. The protein localises to the dendrite. The enzyme catalyses K(+)(in) + chloride(in) = K(+)(out) + chloride(out). Inhibited following phosphorylation by OXSR1/OSR1 and STK39/SPAK: phosphorylation takes place downstream of WNK kinases (WNK1, WNK2, WNK3 or WNK4) in response to hyperosmotic stress and subsequent cell shrinkage. Its function is as follows. Mediates electroneutral potassium-chloride cotransport in mature neurons and is required for neuronal Cl(-) homeostasis. As major extruder of intracellular chloride, it establishes the low neuronal Cl(-) levels required for chloride influx after binding of GABA-A and glycine to their receptors, with subsequent hyperpolarization and neuronal inhibition. Involved in the regulation of dendritic spine formation and maturation. This is Solute carrier family 12 member 5 from Homo sapiens (Human).